The sequence spans 880 residues: Alanine--tRNA ligase (880 aa).

Residues histidine 563, histidine 567, cysteine 673, and histidine 677 each contribute to the Zn(2+) site.

Belongs to the class-II aminoacyl-tRNA synthetase family. Zn(2+) serves as cofactor.

The protein resides in the cytoplasm. The catalysed reaction is tRNA(Ala) + L-alanine + ATP = L-alanyl-tRNA(Ala) + AMP + diphosphate. Catalyzes the attachment of alanine to tRNA(Ala) in a two-step reaction: alanine is first activated by ATP to form Ala-AMP and then transferred to the acceptor end of tRNA(Ala). Also edits incorrectly charged Ser-tRNA(Ala) and Gly-tRNA(Ala) via its editing domain. The protein is Alanine--tRNA ligase of Caulobacter vibrioides (strain ATCC 19089 / CIP 103742 / CB 15) (Caulobacter crescentus).